The following is a 1351-amino-acid chain: Non-structural polyprotein 1AB (1351 aa).

Positions leucine 105–serine 144 form a coiled coil. The next 5 membrane-spanning stretches (helical) occupy residues leucine 153–alanine 173, leucine 231–methionine 251, proline 257–valine 277, isoleucine 304–alanine 324, and valine 337–valine 357. Active-site charge relay system; for serine protease activity residues include histidine 452, aspartate 481, and serine 544. The stretch at glutamate 579–leucine 635 forms a coiled coil. Tyrosine 662 carries the O-(5'-phospho-RNA)-tyrosine modification. Residues tyrosine 687 to glycine 699 are compositionally biased toward acidic residues. Disordered stretches follow at residues tyrosine 687 to aspartate 708 and arginine 822 to glutamate 842. Basic residues predominate over residues arginine 822–glutamine 832. Residues arginine 833 to glutamate 842 show a composition bias toward basic and acidic residues. The RdRp catalytic domain occupies proline 1085 to valine 1217.

This sequence belongs to the astroviridae polyprotein 1AB family. As to quaternary structure, monomer. Cleaved by the viral and host proteases. The protease is probably autocatalytically cleaved.

It localises to the host membrane. The enzyme catalyses RNA(n) + a ribonucleoside 5'-triphosphate = RNA(n+1) + diphosphate. Functionally, responsible for the cleavage of the polyprotein into functional products. Its function is as follows. Protein covalently attached to the 5' extremity of the genomic and subgenomic RNAs. It may serve as a primer for the replicase. The sequence is that of Non-structural polyprotein 1AB (ORF1) from Ovis aries (Sheep).